We begin with the raw amino-acid sequence, 778 residues long: Probable dipeptidyl peptidase 4 (778 aa).

Positions 1–18 (MKTSQFLSLLLLAGIAQA) are cleaved as a signal peptide. N-linked (GlcNAc...) asparagine glycosylation is found at Asn84, Asn114, and Asn222. Catalysis depends on charge relay system residues Ser616, Asp693, and His728.

It belongs to the peptidase S9B family.

The protein localises to the secreted. It carries out the reaction Release of an N-terminal dipeptide, Xaa-Yaa-|-Zaa-, from a polypeptide, preferentially when Yaa is Pro, provided Zaa is neither Pro nor hydroxyproline.. Functionally, extracellular dipeptidyl-peptidase which removes N-terminal dipeptides sequentially from polypeptides having unsubstituted N-termini provided that the penultimate residue is proline. Contributes to pathogenicity. The chain is Probable dipeptidyl peptidase 4 (DPP4) from Arthroderma benhamiae (strain ATCC MYA-4681 / CBS 112371) (Trichophyton mentagrophytes).